We begin with the raw amino-acid sequence, 148 residues long: Protein ADM2 (148 aa).

An N-terminal signal peptide occupies residues 1–24; the sequence is MARIPTAALGCISLLCLQLPGSLS. Positions 25 to 98 are excised as a propeptide; it reads RSLGGDPRPV…HSGPRRHSGP (74 aa). Disordered regions lie at residues 26–57 and 70–101; these read SLGG…APRP and RGAG…PRRT. Cysteine 110 and cysteine 115 are disulfide-bonded. A Tyrosine amide modification is found at tyrosine 147.

The protein belongs to the adrenomedullin family. Expressed in the esophagus, stomach, jejunum, ileum, ileocecum, ascending colon, transverse colon, descending colon and rectum. Expressed in myocardial cells of the heart, renal tubular cells, hypothalamus, and pituitary.

It localises to the secreted. Its function is as follows. Intermedin/ADM2 is a peptide hormone that plays a role as physiological regulator of gastrointestinal and cardiovascular bioactivities mediated by the CALCRL-RAMPs receptor complexes. Activates the cAMP-dependent pathway through interaction with CALCRL-RAMP3 receptor complex. This chain is Protein ADM2, found in Homo sapiens (Human).